The following is a 577-amino-acid chain: Arginine--tRNA ligase (577 aa).

The 'HIGH' region signature appears at 122 to 132; that stretch reads PNVAKEMHVGH.

Belongs to the class-I aminoacyl-tRNA synthetase family. As to quaternary structure, monomer.

Its subcellular location is the cytoplasm. It carries out the reaction tRNA(Arg) + L-arginine + ATP = L-arginyl-tRNA(Arg) + AMP + diphosphate. The sequence is that of Arginine--tRNA ligase from Salmonella choleraesuis (strain SC-B67).